The chain runs to 307 residues: Porphobilinogen deaminase (307 aa).

At Cys-239 the chain carries S-(dipyrrolylmethanemethyl)cysteine.

This sequence belongs to the HMBS family. In terms of assembly, monomer. Dipyrromethane serves as cofactor.

The enzyme catalyses 4 porphobilinogen + H2O = hydroxymethylbilane + 4 NH4(+). It functions in the pathway porphyrin-containing compound metabolism; protoporphyrin-IX biosynthesis; coproporphyrinogen-III from 5-aminolevulinate: step 2/4. Tetrapolymerization of the monopyrrole PBG into the hydroxymethylbilane pre-uroporphyrinogen in several discrete steps. This is Porphobilinogen deaminase from Campylobacter jejuni subsp. jejuni serotype O:23/36 (strain 81-176).